Here is a 467-residue protein sequence, read N- to C-terminus: 3-isopropylmalate dehydratase large subunit (467 aa).

Residues Cys348, Cys408, and Cys411 each contribute to the [4Fe-4S] cluster site. The disordered stretch occupies residues 417–445; sequence DQLTPGERSASTSNRNFEGRQGKGGRTHL.

This sequence belongs to the aconitase/IPM isomerase family. LeuC type 1 subfamily. Heterodimer of LeuC and LeuD. It depends on [4Fe-4S] cluster as a cofactor.

It catalyses the reaction (2R,3S)-3-isopropylmalate = (2S)-2-isopropylmalate. Its pathway is amino-acid biosynthesis; L-leucine biosynthesis; L-leucine from 3-methyl-2-oxobutanoate: step 2/4. Catalyzes the isomerization between 2-isopropylmalate and 3-isopropylmalate, via the formation of 2-isopropylmaleate. The chain is 3-isopropylmalate dehydratase large subunit from Saccharopolyspora erythraea (strain ATCC 11635 / DSM 40517 / JCM 4748 / NBRC 13426 / NCIMB 8594 / NRRL 2338).